Consider the following 141-residue polypeptide: Large ribosomal subunit protein uL11 (141 aa).

This sequence belongs to the universal ribosomal protein uL11 family. Part of the ribosomal stalk of the 50S ribosomal subunit. Interacts with L10 and the large rRNA to form the base of the stalk. L10 forms an elongated spine to which L12 dimers bind in a sequential fashion forming a multimeric L10(L12)X complex. One or more lysine residues are methylated.

Forms part of the ribosomal stalk which helps the ribosome interact with GTP-bound translation factors. The chain is Large ribosomal subunit protein uL11 from Listeria innocua serovar 6a (strain ATCC BAA-680 / CLIP 11262).